The sequence spans 192 residues: MKNKVVVIVGVPGVGSTTVTNKAIEELKKEGIEYKIVNFGTVMFEIAKEEGLVEHRDQLRKLPPEEQKRIQKLAGKKIAEMAKEFNIVVDTHSTIKTPKGYLPGLPAWVLEELNPDIIVLVEAENDEILMRRLKDETRQRDFESTEDIGEHIFMNRCAAMTYAVLTGATVKIIKNRDFLLDKAVQELIEVLK.

10–18 provides a ligand contact to ATP; sequence GVPGVGSTT.

It belongs to the archaeal adenylate kinase family. Monomer.

It is found in the cytoplasm. The enzyme catalyses AMP + ATP = 2 ADP. The sequence is that of Adenylate kinase (adkA) from Methanocaldococcus jannaschii (strain ATCC 43067 / DSM 2661 / JAL-1 / JCM 10045 / NBRC 100440) (Methanococcus jannaschii).